A 482-amino-acid polypeptide reads, in one-letter code: Chromosomal replication initiator protein DnaA (482 aa).

A domain I, interacts with DnaA modulators region spans residues 1–71 (MKQSILFERV…TGLFQAEDPE (71 aa)). Positions 71 to 139 (EILKIEVLVR…ASFGSPLFGS (69 aa)) are domain II. The segment at 140-362 (PLDSRFTFDT…GAFNQLVFRR (223 aa)) is domain III, AAA+ region. ATP-binding residues include Gly-186, Gly-188, Lys-189, and Thr-190. A domain IV, binds dsDNA region spans residues 363–482 (SFEPNLSIER…VELLKRLINE (120 aa)).

Belongs to the DnaA family. In terms of assembly, oligomerizes as a right-handed, spiral filament on DNA at oriC.

The protein resides in the cytoplasm. Functionally, plays an essential role in the initiation and regulation of chromosomal replication. ATP-DnaA binds to the origin of replication (oriC) to initiate formation of the DNA replication initiation complex once per cell cycle. Binds the DnaA box (a 9 base pair repeat at the origin) and separates the double-stranded (ds)DNA. Forms a right-handed helical filament on oriC DNA; dsDNA binds to the exterior of the filament while single-stranded (ss)DNA is stabiized in the filament's interior. The ATP-DnaA-oriC complex binds and stabilizes one strand of the AT-rich DNA unwinding element (DUE), permitting loading of DNA polymerase. After initiation quickly degrades to an ADP-DnaA complex that is not apt for DNA replication. Binds acidic phospholipids. This is Chromosomal replication initiator protein DnaA from Rhizobium johnstonii (strain DSM 114642 / LMG 32736 / 3841) (Rhizobium leguminosarum bv. viciae).